The following is a 520-amino-acid chain: GMP synthase [glutamine-hydrolyzing] (520 aa).

In terms of domain architecture, Glutamine amidotransferase type-1 spans 3–200 (AIAIIDFGSQ…FLDIANCKRD (198 aa)). The active-site Nucleophile is the cysteine 84. Active-site residues include histidine 175 and glutamate 177. The region spanning 201–386 (WTMKSFIEEQ…IGLSDEIIFQ (186 aa)) is the GMPS ATP-PPase domain. ATP is bound at residue 228-234 (SGGVDSS).

Homodimer.

The catalysed reaction is XMP + L-glutamine + ATP + H2O = GMP + L-glutamate + AMP + diphosphate + 2 H(+). The protein operates within purine metabolism; GMP biosynthesis; GMP from XMP (L-Gln route): step 1/1. Catalyzes the synthesis of GMP from XMP. The protein is GMP synthase [glutamine-hydrolyzing] of Wolbachia pipientis wMel.